A 129-amino-acid chain; its full sequence is Large-conductance mechanosensitive channel (129 aa).

3 consecutive transmembrane segments (helical) span residues 14–34 (IIDLAVAVVIGGAFGKIVTSL), 38–58 (IIMPLVGVLTGGIDLTASFVY), and 67–87 (LGVFLQSIIDFLIIAFAIFMA).

It belongs to the MscL family. As to quaternary structure, homopentamer.

The protein resides in the cell membrane. In terms of biological role, channel that opens in response to stretch forces in the membrane lipid bilayer. May participate in the regulation of osmotic pressure changes within the cell. This Lysinibacillus sphaericus (strain C3-41) protein is Large-conductance mechanosensitive channel.